The sequence spans 584 residues: MNNHIEALSYYLGAFVDELTRLNVCDVVISPGSRSTPIALLMEQHEGMNTYLHVDERSAGFFALGIAKAKKRPVALLCTSGTAAANYYPAVCEAFHSRVPLIVLTADRPHELRDVGAPQAMNQINLYGTFVKQFTEMALPEASEAMYHYARMTTQRMIASACLAPQGPVHLNFPVREPLIPDFSLESLWDKGRGEYTGVVQQGNAVMPSEYVDSLVGRLSHMKKGLIICGDDSHSEIATFATQLAEKTGYPILADPLSNIRSGHHDKTMVIDCYDTFLRNELLKETWKPDVLIRFGGMPVSKALTQFIKKQTKAVHIVVDESGQWRDPALVATEVVQASDIAFCSALIEKMPVMKKNDWFRMWQHINEKTKETLREMETYDTAFEGRVITDIVRVLPEGATLFASNSMPIRDTDSFFFTSDKTIQVMANRGVNGIDGIISTALGASMICDPLVLVIGDLSFYHDLNGLLAAKLHELNITIVVVNNDGGGIFSFLPQYEKKEHFESLFGTPIGLDYEHVVTMYGGSFSRVNGWEQFREEVQKGATTEGLHVVEICTNRDENVTLHRKLWAKTQDVITTSLQGESK.

This sequence belongs to the TPP enzyme family. MenD subfamily. In terms of assembly, homodimer. Mg(2+) is required as a cofactor. Requires Mn(2+) as cofactor. It depends on thiamine diphosphate as a cofactor.

The enzyme catalyses isochorismate + 2-oxoglutarate + H(+) = 5-enolpyruvoyl-6-hydroxy-2-succinyl-cyclohex-3-ene-1-carboxylate + CO2. It functions in the pathway quinol/quinone metabolism; 1,4-dihydroxy-2-naphthoate biosynthesis; 1,4-dihydroxy-2-naphthoate from chorismate: step 2/7. The protein operates within quinol/quinone metabolism; menaquinone biosynthesis. Functionally, catalyzes the thiamine diphosphate-dependent decarboxylation of 2-oxoglutarate and the subsequent addition of the resulting succinic semialdehyde-thiamine pyrophosphate anion to isochorismate to yield 2-succinyl-5-enolpyruvyl-6-hydroxy-3-cyclohexene-1-carboxylate (SEPHCHC). The polypeptide is 2-succinyl-5-enolpyruvyl-6-hydroxy-3-cyclohexene-1-carboxylate synthase (Bacillus thuringiensis subsp. konkukian (strain 97-27)).